Reading from the N-terminus, the 229-residue chain is MPAAGPPLLLLGTPGSGKTALLFAAALEAAGEGQGPVLFLTRRPLQSMPRGTGTTLDPMRLQKIRFQYPPSTRELFRLLCSAHEAPGPAPSLLLLDGLEEYLAEDPEPQEAAYLIALLLDTAAHFSHRLGPGRDCGLMVALQTQEEAGSGDVLHLALLQRYFPAQCWLQPDAPGPGEHGLRACLEPGGLGPRTEWWVTFRSDGEMMIAPWPTQAGDPSSGKGSSSGGQP.

Positions 209 to 229 (PWPTQAGDPSSGKGSSSGGQP) are disordered.

As to quaternary structure, interacts with ZSWIM7; they form a functional complex involved in homologous recombination repair and stabilize each other. Interacts with RAD51, RAD51B, RAD51C, RAD51D and XRCC3; involved in homologous recombination repair.

Its subcellular location is the nucleus. Functionally, ATPase which is preferentially stimulated by single-stranded DNA and is involved in homologous recombination repair (HRR). Has a DNA-binding activity which is independent of its ATPase activity. The polypeptide is ATPase SWSAP1 (SWSAP1) (Homo sapiens (Human)).